Consider the following 485-residue polypeptide: Probable alginate O-acetylase AlgI (485 aa).

The next 9 helical transmembrane spans lie at 7–24 (VFLF…YLSG), 39–61 (FYAW…NYWI), 78–100 (WLLL…NFGV), 115–137 (FILT…ISYI), 150–172 (NLID…VLRF), 312–334 (FLTM…WGAW), 360–382 (AFTF…HVAA), 402–424 (AQLT…FFGL), and 461–483 (ILLL…FLYF). The active site involves His322.

It belongs to the membrane-bound acyltransferase family.

It localises to the cell inner membrane. It functions in the pathway glycan biosynthesis; alginate biosynthesis. In terms of biological role, together with AlgJ and AlgF, forms an inner membrane complex which probably interacts with the alginate polymerization-transport complex and adds acetyl groups at the O-2 and O-3 positions of mannuronate residues. Acetylation of alginate is important for the architecture of biofilms and increases the ability of alginate to act as a defense barrier. The protein is Probable alginate O-acetylase AlgI (algI) of Pseudomonas putida (strain ATCC 47054 / DSM 6125 / CFBP 8728 / NCIMB 11950 / KT2440).